We begin with the raw amino-acid sequence, 895 residues long: DNA double-strand break repair Rad50 ATPase (895 aa).

ATP-binding positions include 32–38 (NGAGKSS) and glutamine 137. Residues 183–253 (SDYDYLKNEL…LNAQLETIKK (71 aa)) are a coiled coil. Positions 411 to 507 (RAEINSSLMQ…ERKHQKKLLD (97 aa)) constitute a Zinc-hook domain. Residues cysteine 455 and cysteine 458 each contribute to the Zn(2+) site. Coiled coils occupy residues 464–510 (TEKS…DRIN) and 618–647 (ENSLKRIDEELNSLRNKKNELYAKKAAMDE).

It belongs to the SMC family. RAD50 subfamily. Homodimer. Forms a heterotetramer composed of two Mre11 subunits and two Rad50 subunits. Zn(2+) is required as a cofactor.

Part of the Rad50/Mre11 complex, which is involved in the early steps of DNA double-strand break (DSB) repair. The complex may facilitate opening of the processed DNA ends to aid in the recruitment of HerA and NurA. Rad50 controls the balance between DNA end bridging and DNA resection via ATP-dependent structural rearrangements of the Rad50/Mre11 complex. In Thermoplasma volcanium (strain ATCC 51530 / DSM 4299 / JCM 9571 / NBRC 15438 / GSS1), this protein is DNA double-strand break repair Rad50 ATPase.